A 487-amino-acid chain; its full sequence is 2-aminomuconic semialdehyde dehydrogenase (487 aa).

231–236 (GSQPTA) lines the NAD(+) pocket. The active-site Proton acceptor is the Glu-253. The active-site Nucleophile is Cys-287. Ser-362 carries the post-translational modification Phosphoserine.

Belongs to the aldehyde dehydrogenase family. In terms of tissue distribution, detected in hepatocytes and in proximal and distal convoluted tubules in kidney cortex (at protein level). Highly expressed in adult liver and in kidney cortex. First detected in embryonic liver after 15 days of development.

It localises to the cytoplasm. The catalysed reaction is 2-aminomuconate 6-semialdehyde + NAD(+) + H2O = (2Z,4E)-2-aminomuconate + NADH + 2 H(+). It functions in the pathway amino-acid degradation; L-kynurenine degradation. Its function is as follows. Catalyzes the NAD-dependent oxidation of 2-aminomuconic semialdehyde of the kynurenine metabolic pathway in L-tryptophan degradation. The sequence is that of 2-aminomuconic semialdehyde dehydrogenase (Aldh8a1) from Mus musculus (Mouse).